The sequence spans 426 residues: Phosphomethylpyrimidine synthase (426 aa).

Substrate is bound by residues asparagine 65, methionine 94, tyrosine 123, histidine 162, 184–186 (SRG), 225–228 (DGLR), and glutamate 264. Histidine 268 is a Zn(2+) binding site. Substrate is bound at residue tyrosine 291. Histidine 332 provides a ligand contact to Zn(2+). Cysteine 409, cysteine 412, and cysteine 416 together coordinate [4Fe-4S] cluster.

The protein belongs to the ThiC family. The cofactor is [4Fe-4S] cluster.

It catalyses the reaction 5-amino-1-(5-phospho-beta-D-ribosyl)imidazole + S-adenosyl-L-methionine = 4-amino-2-methyl-5-(phosphooxymethyl)pyrimidine + CO + 5'-deoxyadenosine + formate + L-methionine + 3 H(+). It participates in cofactor biosynthesis; thiamine diphosphate biosynthesis. Its function is as follows. Catalyzes the synthesis of the hydroxymethylpyrimidine phosphate (HMP-P) moiety of thiamine from aminoimidazole ribotide (AIR) in a radical S-adenosyl-L-methionine (SAM)-dependent reaction. This is Phosphomethylpyrimidine synthase from Thermodesulfovibrio yellowstonii (strain ATCC 51303 / DSM 11347 / YP87).